Reading from the N-terminus, the 140-residue chain is Nucleoside diphosphate kinase (140 aa).

ATP is bound by residues lysine 11, phenylalanine 59, arginine 87, threonine 93, arginine 104, and asparagine 114. The Pros-phosphohistidine intermediate role is filled by histidine 117.

The protein belongs to the NDK family. As to quaternary structure, homotetramer. The cofactor is Mg(2+).

Its subcellular location is the cytoplasm. It catalyses the reaction a 2'-deoxyribonucleoside 5'-diphosphate + ATP = a 2'-deoxyribonucleoside 5'-triphosphate + ADP. The catalysed reaction is a ribonucleoside 5'-diphosphate + ATP = a ribonucleoside 5'-triphosphate + ADP. In terms of biological role, major role in the synthesis of nucleoside triphosphates other than ATP. The ATP gamma phosphate is transferred to the NDP beta phosphate via a ping-pong mechanism, using a phosphorylated active-site intermediate. This Xanthobacter autotrophicus (strain ATCC BAA-1158 / Py2) protein is Nucleoside diphosphate kinase.